Here is a 208-residue protein sequence, read N- to C-terminus: ATP synthase subunit b (208 aa).

Residues Met-1–Ser-18 are compositionally biased toward polar residues. Residues Met-1–Ala-26 form a disordered region. A helical transmembrane segment spans residues Ser-56–Pro-78.

The protein belongs to the ATPase B chain family. In terms of assembly, F-type ATPases have 2 components, F(1) - the catalytic core - and F(0) - the membrane proton channel. F(1) has five subunits: alpha(3), beta(3), gamma(1), delta(1), epsilon(1). F(0) has three main subunits: a(1), b(2) and c(10-14). The alpha and beta chains form an alternating ring which encloses part of the gamma chain. F(1) is attached to F(0) by a central stalk formed by the gamma and epsilon chains, while a peripheral stalk is formed by the delta and b chains.

It localises to the cell inner membrane. In terms of biological role, f(1)F(0) ATP synthase produces ATP from ADP in the presence of a proton or sodium gradient. F-type ATPases consist of two structural domains, F(1) containing the extramembraneous catalytic core and F(0) containing the membrane proton channel, linked together by a central stalk and a peripheral stalk. During catalysis, ATP synthesis in the catalytic domain of F(1) is coupled via a rotary mechanism of the central stalk subunits to proton translocation. Its function is as follows. Component of the F(0) channel, it forms part of the peripheral stalk, linking F(1) to F(0). The sequence is that of ATP synthase subunit b from Brucella melitensis biotype 1 (strain ATCC 23456 / CCUG 17765 / NCTC 10094 / 16M).